We begin with the raw amino-acid sequence, 323 residues long: tRNA uridine(34) hydroxylase (323 aa).

The Rhodanese domain occupies 123–217; that stretch reads SDPDVVVIDT…YLETIPEEES (95 aa). C177 serves as the catalytic Cysteine persulfide intermediate.

This sequence belongs to the TrhO family.

The catalysed reaction is uridine(34) in tRNA + AH2 + O2 = 5-hydroxyuridine(34) in tRNA + A + H2O. In terms of biological role, catalyzes oxygen-dependent 5-hydroxyuridine (ho5U) modification at position 34 in tRNAs. This chain is tRNA uridine(34) hydroxylase, found in Methylobacillus flagellatus (strain ATCC 51484 / DSM 6875 / VKM B-1610 / KT).